We begin with the raw amino-acid sequence, 245 residues long: Aquaporin SIP1-1 (245 aa).

The next 2 helical transmembrane spans lie at 14-34 (AVVTFLWVLCASALGASTAAV) and 55-75 (LLSVLLFTFDLLCGALGGASF). The short motif at 76–78 (NPT) is the NPA 1 element. 3 consecutive transmembrane segments (helical) span residues 100 to 120 (FPAQAAGAVGGALAISELMPA), 138 to 158 (GALAEGVLTFVITLTVLWVIV), and 164 to 184 (VILKTLLLSTSIVSVILAGAE). The NPA 2 motif lies at 191–193 (NPA). The helical transmembrane segment at 213–233 (VYWICPFIGAMLAGWIFRVVF) threads the bilayer.

It belongs to the MIP/aquaporin (TC 1.A.8) family. SIP (TC 1.A.8.10) subfamily.

The protein resides in the membrane. Aquaporins facilitate the transport of water and small neutral solutes across cell membranes. This chain is Aquaporin SIP1-1 (SIP1-1), found in Zea mays (Maize).